Consider the following 473-residue polypeptide: Ornithine aminotransferase, mitochondrial (473 aa).

The transit peptide at 1–32 directs the protein to the mitochondrion; sequence MAAALARRGGGGLARALARGRGMCSATAAERA. Lys293 carries the N6-(pyridoxal phosphate)lysine modification.

Belongs to the class-III pyridoxal-phosphate-dependent aminotransferase family. In terms of assembly, homotetramer. Pyridoxal 5'-phosphate is required as a cofactor.

The protein resides in the mitochondrion matrix. The catalysed reaction is a 2-oxocarboxylate + L-ornithine = L-glutamate 5-semialdehyde + an L-alpha-amino acid. It functions in the pathway amino-acid biosynthesis; L-proline biosynthesis; L-glutamate 5-semialdehyde from L-ornithine: step 1/1. Its function is as follows. Confers drought and oxidative stress tolerance mainly through enhancing ROS-scavenging capacity and Pro pre-accumulation. In Oryza sativa subsp. japonica (Rice), this protein is Ornithine aminotransferase, mitochondrial (OAT).